Here is a 265-residue protein sequence, read N- to C-terminus: Small ribosomal subunit protein uS2 (265 aa).

The disordered stretch occupies residues 226–265 (AAAPNSASVREEEFSAESADEGKGRRAPAKKGDKKADAAE). A compositionally biased stretch (basic and acidic residues) spans 245–265 (DEGKGRRAPAKKGDKKADAAE).

The protein belongs to the universal ribosomal protein uS2 family.

The sequence is that of Small ribosomal subunit protein uS2 from Xanthomonas euvesicatoria pv. vesicatoria (strain 85-10) (Xanthomonas campestris pv. vesicatoria).